We begin with the raw amino-acid sequence, 448 residues long: MEITSSAMLKPAPTPTPHPLAGEKVPLTAFDRAAFDVFVPMVFAYRAPAPSSEAVKEGLRMAVAAYPLAAGRLAVDVAADGQGRRRRRRVLHVNDEGALVLDATVEADLDAVLAANVATDLYPAPPEHSFGAAVLQVQLTRFRCSGLVVGLIVHHHVFDGHSTSAFCTTWARAVRDGEAFSVPSPCLDRAITSVPRSPPAPVFDHRSIEFKVGNKSSDSSGAAAAAVEKITNIGVRFTAKFVAELKARVGGRCSTFECVLAHAWKKMTAARGLKPEEFTRVRVAVNCRRRANPPAPADLFGNMVLWAFPRLQVRRLLSASYRDVVGAIRAAVARVDGEYIQSFVDYVEVADARGEELAATAAEPGETLCPDLEVDSWLGFRFHEMDLGTGPPAAVLSPDLPIEGLMILVPVGGDGGGVDLFVALADDRAQVFEQICYSLEEHAIPSHL.

Positions 1–20 are disordered; sequence MEITSSAMLKPAPTPTPHPL. Active-site proton acceptor residues include histidine 155 and aspartate 386.

The protein belongs to the plant acyltransferase family.

Hydroxycinnamoyl transferase that catalyzes the transfer of an acyl from benzoyl-CoA to tryptamine, to produce benzoyl tryptamine. Serotonin and tyramine serve as acyl acceptors in vitro. Specific for benzoyl-CoA as acyl donor. Has no activity with p-coumaroyl-CoA, caffeoyl-CoA, or feruloyl-CoA as acyl donors. The polypeptide is Tryptamine benzoyltransferase 2 (Oryza sativa subsp. japonica (Rice)).